The primary structure comprises 931 residues: Protocadherin gamma-B2 (931 aa).

Positions 1–30 are cleaved as a signal peptide; sequence MKASSGRCGLVRWLQVLLPFLLSLFPGALP. Cadherin domains follow at residues 31-133, 134-242, 243-347, 348-452, 453-562, and 570-675; these read VQIR…TPLF, KQTK…PPVF, SQDV…APEV, IVTS…APVF, QQTS…APRV, and DGSA…LPDL. The Extracellular segment spans residues 31 to 691; the sequence is VQIRYSIPEE…SDPQAELQFY (661 aa). Residues Asn-419 and Asn-545 are each glycosylated (N-linked (GlcNAc...) asparagine). The helical transmembrane segment at 692–712 threads the bilayer; that stretch reads LVVALALISVLFFLAVILAIS. Over 713–931 the chain is Cytoplasmic; it reads LRLRRSSRSD…KKKSGKKEKK (219 aa). Disordered stretches follow at residues 814–840 and 901–931; these read DWRF…WPNN and ATLT…KEKK. Residues 815–840 show a composition bias toward polar residues; that stretch reads WRFSQAQRPGTSGSQNGDDTGTWPNN. Positions 921–931 are enriched in basic residues; that stretch reads NKKKSGKKEKK.

Its subcellular location is the cell membrane. Potential calcium-dependent cell-adhesion protein. May be involved in the establishment and maintenance of specific neuronal connections in the brain. This is Protocadherin gamma-B2 (PCDHGB2) from Pan troglodytes (Chimpanzee).